Here is a 197-residue protein sequence, read N- to C-terminus: Holliday junction branch migration complex subunit RuvA (197 aa).

Residues 1-63 are domain I; sequence MFDYIKGQLT…EDAHLLFGFH (63 aa). Positions 64-142 are domain II; the sequence is TENEKDVFLK…TIPEGGQAQQ (79 aa). The flexible linker stretch occupies residues 142–146; it reads QMPKA. Residues 147–197 form a domain III region; sequence KGNQQLDEAIEALLALGYKATELKKIRAFFEGTDDTAEQYIKSALKMLMKG.

Belongs to the RuvA family. Homotetramer. Forms an RuvA(8)-RuvB(12)-Holliday junction (HJ) complex. HJ DNA is sandwiched between 2 RuvA tetramers; dsDNA enters through RuvA and exits via RuvB. An RuvB hexamer assembles on each DNA strand where it exits the tetramer. Each RuvB hexamer is contacted by two RuvA subunits (via domain III) on 2 adjacent RuvB subunits; this complex drives branch migration. In the full resolvosome a probable DNA-RuvA(4)-RuvB(12)-RuvC(2) complex forms which resolves the HJ.

It localises to the cytoplasm. Its function is as follows. The RuvA-RuvB-RuvC complex processes Holliday junction (HJ) DNA during genetic recombination and DNA repair, while the RuvA-RuvB complex plays an important role in the rescue of blocked DNA replication forks via replication fork reversal (RFR). RuvA specifically binds to HJ cruciform DNA, conferring on it an open structure. The RuvB hexamer acts as an ATP-dependent pump, pulling dsDNA into and through the RuvAB complex. HJ branch migration allows RuvC to scan DNA until it finds its consensus sequence, where it cleaves and resolves the cruciform DNA. The chain is Holliday junction branch migration complex subunit RuvA from Streptococcus uberis (strain ATCC BAA-854 / 0140J).